Consider the following 874-residue polypeptide: Probable inorganic carbon transporter subunit DabA (874 aa).

Residues Cys-398, Asp-400, His-580, and Cys-595 each coordinate Zn(2+).

The protein belongs to the inorganic carbon transporter (TC 9.A.2) DabA family. Forms a complex with DabB. Requires Zn(2+) as cofactor.

Its subcellular location is the cell membrane. In terms of biological role, part of an energy-coupled inorganic carbon pump. This chain is Probable inorganic carbon transporter subunit DabA, found in Bacillus anthracis (strain A0248).